The sequence spans 274 residues: Basic leucine zipper transcriptional factor ATF-like 2 (274 aa).

Disordered stretches follow at residues 1 to 47 (MHLC…ALHQ), 128 to 151 (GSCY…LLQC), and 187 to 229 (GSSS…PSSA). One can recognise a bZIP domain in the interval 17-80 (EQQRQLKKQK…AWWSRTLHVH (64 aa)). The segment at 20–41 (RQLKKQKNRAAAQRSRQKHTDK) is basic motif. Basic and acidic residues predominate over residues 37–47 (KHTDKADALHQ). The leucine-zipper stretch occupies residues 45-66 (LHQQHESLEKDNLALRKEIQSL). A compositionally biased stretch (low complexity) spans 187 to 196 (GSSSKLSALQ).

It belongs to the bZIP family. Heterodimer; heterodimerizes with JUN family proteins.

The protein resides in the nucleus. Functionally, AP-1 family transcription factor that controls the differentiation of lineage-specific cells in the immune system. Following infection, participates in the differentiation of CD8(+) thymic conventional dendritic cells in the immune system. Acts via the formation of a heterodimer with JUN family proteins that recognizes and binds DNA sequence 5'-TGA[CG]TCA-3' and regulates expression of target genes. Selectively suppresses CCN1 transcription and hence blocks the downstream cell proliferation signals produced by CCN1 and inhibits CCN1-induced anchorage-independent growth and invasion in several cancer types, such as breast cancer, malignant glioma and metastatic melanoma. Possibly acts by interfering with AP-1 binding to CCN1 promoter. The sequence is that of Basic leucine zipper transcriptional factor ATF-like 2 (BATF2) from Homo sapiens (Human).